The primary structure comprises 206 residues: Outer-membrane lipoprotein LolB (206 aa).

An N-terminal signal peptide occupies residues M1–A21. C22 carries the N-palmitoyl cysteine lipid modification. C22 is lipidated: S-diacylglycerol cysteine.

Belongs to the LolB family. Monomer.

Its subcellular location is the cell outer membrane. Plays a critical role in the incorporation of lipoproteins in the outer membrane after they are released by the LolA protein. This chain is Outer-membrane lipoprotein LolB, found in Sodalis glossinidius (strain morsitans).